We begin with the raw amino-acid sequence, 568 residues long: Zinc finger protein 768 (568 aa).

Residues 1–16 (MEREASSWGLESRDVH) are compositionally biased toward basic and acidic residues. Disordered stretches follow at residues 1-223 (MERE…SLGV), 228-247 (SFTQGFGEQPTGALPPFDMP), and 264-287 (LNLTGTLRGPGRRGGRARGGQGPR). 3 positions are modified to phosphoserine: S17, S23, and S27. Residue T35 is modified to Phosphothreonine. Phosphoserine is present on residues S36, S65, S72, S79, S86, S93, S100, S107, S114, S121, S128, S135, and S149. Over residues 62 to 80 (EPQSPEFEPQSPEFESQSP) the composition is skewed to low complexity. Over residues 110–122 (SDPQSPEFESQSP) the composition is skewed to polar residues. A Phosphotyrosine modification is found at Y152. At S154 the chain carries Phosphoserine. Residues 159-186 (FESQSPGYESQSPGYEPQNSGDGVQNSE) show a composition bias toward polar residues. Position 189 is a phosphothreonine (T189). S191 is modified (phosphoserine). The C2H2-type 1 zinc finger occupies 289 to 311 (NICGICGKSFGRGSTLIQHQRIH). Phosphothreonine is present on T312. Y317 carries the post-translational modification Phosphotyrosine. C2H2-type zinc fingers lie at residues 317 to 339 (YKCEVCSKAFSQSSDLIKHQRTH), 345 to 367 (YKCPRCGKAFADSSYLLRHQRTH), 373 to 395 (YKCPHCGKAFGDSSYLLRHQRTH), and 401 to 423 (YSCPECGKCYSQNSSLRSHQRVH). S323 and S327 each carry phosphoserine. T424 carries the post-translational modification Phosphothreonine. 5 C2H2-type zinc fingers span residues 429-451 (FSCGICGKSFSQRSALIPHARSH), 457-479 (FKCPECGKRFGQSSVLAIHARTH), 485-507 (YSCPDCGKTFNRSSTLIQHQRSH), 513-535 (YRCAVCGKGFCRSSTLLQHHRVH), and 541-563 (YKCDDCGKAFSQSSDLIRHQRTH). At S470 the chain carries Phosphoserine.

Belongs to the krueppel C2H2-type zinc-finger protein family. Interacts (via zinc-finger domains) with TP53 (via N-terminus); interaction might be facilitated by TP53 oligomerization state. Interacts with ELP3. Post-translationally, may be phosphorylated at residue 'Ser-5' of the tandem heptapeptide repeats in the N-terminus. Phosphorylation might be increased upon RAS pathway activation and negatively regulate protein stability.

The protein localises to the nucleus. The protein resides in the chromosome. Binds to mammalian-wide interspersed repeat (MIRs) sequences in euchromatin and promoter regions of genes at the consensus sequence 5'-GCTGTGTG-[N20]-CCTCTCTG-3', consisting of two anchor regions connected by a linker region; the linker region probably does not contribute to the binding specificity. Required for cell homeostasis. May be involved in transcriptional regulation. This Mus musculus (Mouse) protein is Zinc finger protein 768 (Znf768).